The following is a 117-amino-acid chain: Anti-sigma F factor antagonist (117 aa).

In terms of domain architecture, STAS spans 2–115; sequence HFQLEMVTRE…QAIDRVRGIV (114 aa). The residue at position 58 (serine 58) is a Phosphoserine.

It belongs to the anti-sigma-factor antagonist family. In terms of processing, phosphorylated by SpoIIAB on a serine residue.

Functionally, in the phosphorylated form it could act as an anti-anti-sigma factor that counteracts SpoIIAB and thus releases sigma f from inhibition. This is Anti-sigma F factor antagonist (spoIIAA) from Lysinibacillus sphaericus (Bacillus sphaericus).